A 252-amino-acid chain; its full sequence is Coenzyme F420:L-glutamate ligase (252 aa).

Residues 12 to 15, 44 to 45, and K49 each bind GTP; these read VPLE and HT. An a divalent metal cation-binding site is contributed by D114. N117 is a binding site for GTP. A divalent metal cation is bound by residues D155, T156, and Q213. Residue 211–218 participates in GTP binding; that stretch reads MGQADEGT.

It belongs to the CofE family. In terms of assembly, homodimer. Mg(2+) is required as a cofactor. Mn(2+) serves as cofactor. The cofactor is K(+).

The enzyme catalyses oxidized coenzyme F420-0 + GTP + L-glutamate = oxidized coenzyme F420-1 + GDP + phosphate + H(+). It carries out the reaction oxidized coenzyme F420-1 + GTP + L-glutamate = oxidized coenzyme F420-2 + GDP + phosphate + H(+). It participates in cofactor biosynthesis; coenzyme F420 biosynthesis. Catalyzes the GTP-dependent successive addition of two or more gamma-linked L-glutamates to the L-lactyl phosphodiester of 7,8-didemethyl-8-hydroxy-5-deazariboflavin (F420-0) to form coenzyme F420-0-glutamyl-glutamate (F420-2) or polyglutamated F420 derivatives. In Methanopyrus kandleri (strain AV19 / DSM 6324 / JCM 9639 / NBRC 100938), this protein is Coenzyme F420:L-glutamate ligase.